A 254-amino-acid polypeptide reads, in one-letter code: 3-oxo-5-alpha-steroid 4-dehydrogenase 2 (254 aa).

4 helical membrane passes run 8-28 (VPVL…LCFG), 72-92 (PRSL…AHYF), 146-166 (FSVG…SDCM), and 206-226 (LATW…FLGM).

Belongs to the steroid 5-alpha reductase family.

Its subcellular location is the microsome membrane. The protein localises to the endoplasmic reticulum membrane. The enzyme catalyses a 3-oxo-5alpha-steroid + NADP(+) = a 3-oxo-Delta(4)-steroid + NADPH + H(+). It carries out the reaction 17beta-hydroxy-5alpha-androstan-3-one + NADP(+) = testosterone + NADPH + H(+). It catalyses the reaction 5alpha-pregnane-3,20-dione + NADP(+) = progesterone + NADPH + H(+). Functionally, converts testosterone (T) into 5-alpha-dihydrotestosterone (DHT) and progesterone or corticosterone into their corresponding 5-alpha-3-oxosteroids. It plays a central role in sexual differentiation and androgen physiology. The protein is 3-oxo-5-alpha-steroid 4-dehydrogenase 2 (Srd5a2) of Mus musculus (Mouse).